We begin with the raw amino-acid sequence, 177 residues long: Protein GrpE (177 aa).

The segment at 1–26 (MSEEIKKDDLQEEVEATETEETVEEV) is disordered. Residues 10 to 26 (LQEEVEATETEETVEEV) show a composition bias toward acidic residues.

It belongs to the GrpE family. Homodimer.

It localises to the cytoplasm. Its function is as follows. Participates actively in the response to hyperosmotic and heat shock by preventing the aggregation of stress-denatured proteins, in association with DnaK and GrpE. It is the nucleotide exchange factor for DnaK and may function as a thermosensor. Unfolded proteins bind initially to DnaJ; upon interaction with the DnaJ-bound protein, DnaK hydrolyzes its bound ATP, resulting in the formation of a stable complex. GrpE releases ADP from DnaK; ATP binding to DnaK triggers the release of the substrate protein, thus completing the reaction cycle. Several rounds of ATP-dependent interactions between DnaJ, DnaK and GrpE are required for fully efficient folding. This chain is Protein GrpE, found in Streptococcus agalactiae serotype Ia (strain ATCC 27591 / A909 / CDC SS700).